Consider the following 125-residue polypeptide: NADH dehydrogenase [ubiquinone] 1 beta subcomplex subunit 8, mitochondrial (125 aa).

The transit peptide at 1–29 (MAGRLSGVASRIMGGNGVVARSVGSSLRQ) directs the protein to the mitochondrion. The helical transmembrane segment at 78–98 (ALAWLSGGLGFFVGLGLLAVL) threads the bilayer.

It belongs to the complex I NDUFB8 subunit family. Complex I is composed of at least 49 different subunits.

Its subcellular location is the mitochondrion inner membrane. Its function is as follows. Accessory subunit of the mitochondrial membrane respiratory chain NADH dehydrogenase (Complex I), that is believed not to be involved in catalysis. Complex I functions in the transfer of electrons from NADH to the respiratory chain. The immediate electron acceptor for the enzyme is believed to be ubiquinone. This chain is NADH dehydrogenase [ubiquinone] 1 beta subcomplex subunit 8, mitochondrial, found in Arabidopsis thaliana (Mouse-ear cress).